Consider the following 496-residue polypeptide: Cytochrome P450 71B12 (496 aa).

The helical transmembrane segment at 2–22 (SLWYIIVAFVFFSSMIIVRII) threads the bilayer. A heme-binding site is contributed by C436.

Belongs to the cytochrome P450 family. Heme is required as a cofactor.

Its subcellular location is the membrane. This is Cytochrome P450 71B12 (CYP71B12) from Arabidopsis thaliana (Mouse-ear cress).